Consider the following 320-residue polypeptide: F-box protein At2g02240 (320 aa).

Residues 58 to 104 (TSPFDVLPEDCISNIISFTSPRDACVAASVSKTFESAVSSDCVWDKF) form the F-box domain.

The protein is F-box protein At2g02240 of Arabidopsis thaliana (Mouse-ear cress).